Here is a 396-residue protein sequence, read N- to C-terminus: Agropine synthesis cyclase (396 aa).

It belongs to the peptidase M24B family.

This Rhizobium rhizogenes (Agrobacterium rhizogenes) protein is Agropine synthesis cyclase (ags).